An 89-amino-acid polypeptide reads, in one-letter code: MQLQASLSFLLILTLCLELRSELARDTIKDLLPNVCAFPMEKGPCQTYMTRWFFNFETGECELFAYGGCGGNSNNFLRKEKCEKFCKFT.

The signal sequence occupies residues 1–24; the sequence is MQLQASLSFLLILTLCLELRSELA. Residues 36-86 enclose the BPTI/Kunitz inhibitor domain; it reads CAFPMEKGPCQTYMTRWFFNFETGECELFAYGGCGGNSNNFLRKEKCEKFC. Cystine bridges form between Cys-36–Cys-86, Cys-45–Cys-69, and Cys-61–Cys-82.

It is found in the secreted. The sequence is that of Kunitz-type protease inhibitor 3 (SPINT3) from Homo sapiens (Human).